A 286-amino-acid chain; its full sequence is tRNA (guanine-N(7)-)-methyltransferase (286 aa).

The tract at residues 1 to 21 (MTNPESTAIDPVAAMGTDHTE) is disordered. Glutamate 91, glutamate 116, asparagine 143, and aspartate 165 together coordinate S-adenosyl-L-methionine. Aspartate 165 is a catalytic residue. Residues lysine 169, aspartate 201, and 262 to 265 (TNFE) each bind substrate.

Belongs to the class I-like SAM-binding methyltransferase superfamily. TrmB family.

It carries out the reaction guanosine(46) in tRNA + S-adenosyl-L-methionine = N(7)-methylguanosine(46) in tRNA + S-adenosyl-L-homocysteine. It functions in the pathway tRNA modification; N(7)-methylguanine-tRNA biosynthesis. Functionally, catalyzes the formation of N(7)-methylguanine at position 46 (m7G46) in tRNA. The protein is tRNA (guanine-N(7)-)-methyltransferase of Bifidobacterium longum (strain NCC 2705).